The primary structure comprises 417 residues: Serine hydroxymethyltransferase (417 aa).

Residues leucine 122 and 126–128 (GHL) contribute to the (6S)-5,6,7,8-tetrahydrofolate site. Lysine 231 is modified (N6-(pyridoxal phosphate)lysine).

The protein belongs to the SHMT family. As to quaternary structure, homodimer. Requires pyridoxal 5'-phosphate as cofactor.

The protein localises to the cytoplasm. The enzyme catalyses (6R)-5,10-methylene-5,6,7,8-tetrahydrofolate + glycine + H2O = (6S)-5,6,7,8-tetrahydrofolate + L-serine. It functions in the pathway one-carbon metabolism; tetrahydrofolate interconversion. It participates in amino-acid biosynthesis; glycine biosynthesis; glycine from L-serine: step 1/1. Catalyzes the reversible interconversion of serine and glycine with tetrahydrofolate (THF) serving as the one-carbon carrier. This reaction serves as the major source of one-carbon groups required for the biosynthesis of purines, thymidylate, methionine, and other important biomolecules. Also exhibits THF-independent aldolase activity toward beta-hydroxyamino acids, producing glycine and aldehydes, via a retro-aldol mechanism. In Caldicellulosiruptor saccharolyticus (strain ATCC 43494 / DSM 8903 / Tp8T 6331), this protein is Serine hydroxymethyltransferase.